Consider the following 298-residue polypeptide: Probable endonuclease 4 (298 aa).

His69, His111, Glu146, Asp180, His183, His215, Asp228, His230, and Glu260 together coordinate Zn(2+).

It belongs to the AP endonuclease 2 family. Zn(2+) serves as cofactor.

The catalysed reaction is Endonucleolytic cleavage to 5'-phosphooligonucleotide end-products.. Endonuclease IV plays a role in DNA repair. It cleaves phosphodiester bonds at apurinic or apyrimidinic (AP) sites, generating a 3'-hydroxyl group and a 5'-terminal sugar phosphate. The chain is Probable endonuclease 4 from Bacillus cereus (strain AH187).